A 487-amino-acid chain; its full sequence is MNEILKKSYVELKDSLNSGKISSTELVSACINRIREVDGAVKAFLYLDEKKVLNSAEESDKRRKEGKPLSEFDGMPVAIKDNICIRDTITSCSSKILENYKSPFHATVVEKLLEKGFILFPRTNMDEFAMGSSTENSAFQTTRNPFDLERIPGGSSGGSAAAVAASMVPLALGSDTGGSVRQPASLCGLYGLKPTYGTVSRYGLVAYASSLDQIGPFSRELQGCIDLYSVISGKDVRDSTSIHRPKFSASDVQPQDFKGLKVGVIKMTPEIQSEVVKSYDKVLNQLKEKGATLVDLDFSKFGFAIPIYYIIATAECSSNLSRFDGIRFGSRKDKTGKLEDLFVDSRTEGFGPEVKRRILLGTFSLSAGYYDAYYGTAQKARALIRKEYESFFSKVDCILQPTSPTTAFKIGEKTKDPIQMYKADIWTTSVNLAGLPAMSVPMGADQKGLPIGLQITTPHFQEGKLFGIALALSTLEGMNIQFPESIK.

Catalysis depends on charge relay system residues lysine 80 and serine 155. Serine 179 acts as the Acyl-ester intermediate in catalysis.

This sequence belongs to the amidase family. GatA subfamily. As to quaternary structure, heterotrimer of A, B and C subunits.

The catalysed reaction is L-glutamyl-tRNA(Gln) + L-glutamine + ATP + H2O = L-glutaminyl-tRNA(Gln) + L-glutamate + ADP + phosphate + H(+). Functionally, allows the formation of correctly charged Gln-tRNA(Gln) through the transamidation of misacylated Glu-tRNA(Gln) in organisms which lack glutaminyl-tRNA synthetase. The reaction takes place in the presence of glutamine and ATP through an activated gamma-phospho-Glu-tRNA(Gln). The sequence is that of Glutamyl-tRNA(Gln) amidotransferase subunit A from Leptospira interrogans serogroup Icterohaemorrhagiae serovar Lai (strain 56601).